The chain runs to 194 residues: 7-methyl-GTP pyrophosphatase (194 aa).

D71 (proton acceptor) is an active-site residue.

It belongs to the Maf family. YceF subfamily. A divalent metal cation is required as a cofactor.

It localises to the cytoplasm. The enzyme catalyses N(7)-methyl-GTP + H2O = N(7)-methyl-GMP + diphosphate + H(+). Nucleoside triphosphate pyrophosphatase that hydrolyzes 7-methyl-GTP (m(7)GTP). May have a dual role in cell division arrest and in preventing the incorporation of modified nucleotides into cellular nucleic acids. This Aromatoleum aromaticum (strain DSM 19018 / LMG 30748 / EbN1) (Azoarcus sp. (strain EbN1)) protein is 7-methyl-GTP pyrophosphatase.